Here is a 183-residue protein sequence, read N- to C-terminus: Capsid protein (183 aa).

The segment at 136 to 183 is disordered; that stretch reads NAPILSTLPETTVVRRRGRSPRRRTPSPRRRRSQSPRRRRSQSPASQC. Positions 149 to 176 are enriched in basic residues; it reads VRRRGRSPRRRTPSPRRRRSQSPRRRRS. Ser155, Ser162, and Ser170 each carry phosphoserine; by host. One copy of the 1; half-length repeat lies at 155-161; the sequence is SPRRRTP. Residues 155-177 are 3 X 8 AA repeats of S-P-R-R-R-[PR]-S-Q; that stretch reads SPRRRTPSPRRRRSQSPRRRRSQ. A Bipartite nuclear localization signal motif is present at residues 158 to 175; the sequence is RRTPSPRRRRSQSPRRRR. 2 tandem repeats follow at residues 162-169 and 170-177. Residues 177–183 form an RNA binding region; it reads QSPASQC.

It belongs to the orthohepadnavirus core antigen family. In terms of assembly, homodimerizes, then multimerizes. Interacts with cytosol exposed regions of viral L glycoprotein present in the reticulum-to-Golgi compartment. Interacts with human FLNB. Phosphorylated form interacts with host importin alpha; this interaction depends on the exposure of the NLS, which itself depends upon genome maturation and/or phosphorylation of the capsid protein. Interacts with host NUP153. In terms of processing, phosphorylated by host SRPK1, SRPK2, and maybe protein kinase C or GAPDH. Phosphorylation is critical for pregenomic RNA packaging. Protein kinase C phosphorylation is stimulated by HBx protein and may play a role in transport of the viral genome to the nucleus at the late step during the viral replication cycle.

It localises to the virion. Its subcellular location is the host cytoplasm. Its function is as follows. Self assembles to form an icosahedral capsid. Most capsids appear to be large particles with an icosahedral symmetry of T=4 and consist of 240 copies of capsid protein, though a fraction forms smaller T=3 particles consisting of 180 capsid proteins. Entering capsids are transported along microtubules to the nucleus. Phosphorylation of the capsid is thought to induce exposure of nuclear localization signal in the C-terminal portion of the capsid protein that allows binding to the nuclear pore complex via the importin (karyopherin-) alpha and beta. Capsids are imported in intact form through the nuclear pore into the nuclear basket, where it probably binds NUP153. Only capsids that contain the mature viral genome can release the viral DNA and capsid protein into the nucleoplasm. Immature capsids get stuck in the basket. Capsids encapsulate the pre-genomic RNA and the P protein. Pre-genomic RNA is reverse-transcribed into DNA while the capsid is still in the cytoplasm. The capsid can then either be directed to the nucleus, providing more genomes for transcription, or bud through the endoplasmic reticulum to provide new virions. The sequence is that of Capsid protein from Homo sapiens (Human).